The sequence spans 250 residues: Glutamate racemase (250 aa).

Substrate-binding positions include 7–8 and 39–40; these read DS and YG. Catalysis depends on C70, which acts as the Proton donor/acceptor. A substrate-binding site is contributed by 71-72; it reads NT. The active-site Proton donor/acceptor is the C180. Substrate is bound at residue 181-182; it reads TH.

This sequence belongs to the aspartate/glutamate racemases family.

It catalyses the reaction L-glutamate = D-glutamate. It participates in cell wall biogenesis; peptidoglycan biosynthesis. In terms of biological role, provides the (R)-glutamate required for cell wall biosynthesis. The protein is Glutamate racemase of Campylobacter jejuni subsp. jejuni serotype O:2 (strain ATCC 700819 / NCTC 11168).